Reading from the N-terminus, the 113-residue chain is Urocortin-2 (113 aa).

Positions 1–23 (MMTRWALVVFVVLMLDRILFVPG) are cleaved as a signal peptide. Residues 24 to 71 (TPIPTFQLLPQNSLETTPSSVTSESSSGTTTGPSASWSNSKASPYLDT) constitute a propeptide that is removed on maturation. Over residues 37–61 (LETTPSSVTSESSSGTTTGPSASWS) the composition is skewed to low complexity. The disordered stretch occupies residues 37-64 (LETTPSSVTSESSSGTTTGPSASWSNSK). Valine amide; partial is present on valine 110.

It belongs to the sauvagine/corticotropin-releasing factor/urotensin I family. As to quaternary structure, binds with high affinity to CRF receptors 2-alpha and 2-beta. Glycosylated.

It localises to the secreted. Functionally, suppresses food intake, delays gastric emptying and decreases heat-induced edema. Might represent an endogenous ligand for maintaining homeostasis after stress. In Mus musculus (Mouse), this protein is Urocortin-2 (Ucn2).